A 437-amino-acid polypeptide reads, in one-letter code: Chromosomal replication initiator protein DnaA (437 aa).

The tract at residues 1–82 (MIFPIWKKCL…KIIINIEKKK (82 aa)) is domain I, interacts with DnaA modulators. Residues 82–101 (KLEKKKCIYKKKNIQIYLHS) are domain II. Residues 102–318 (EINKKYQFHN…GILKKIQILS (217 aa)) form a domain III, AAA+ region region. Positions 146, 148, 149, and 150 each coordinate ATP. The domain IV, binds dsDNA stretch occupies residues 319-437 (ILNKEKITIN…FIYLFNQLNA (119 aa)).

This sequence belongs to the DnaA family. As to quaternary structure, oligomerizes as a right-handed, spiral filament on DNA at oriC.

The protein localises to the cytoplasm. In terms of biological role, plays an essential role in the initiation and regulation of chromosomal replication. ATP-DnaA binds to the origin of replication (oriC) to initiate formation of the DNA replication initiation complex once per cell cycle. Binds the DnaA box (a 9 base pair repeat at the origin) and separates the double-stranded (ds)DNA. Forms a right-handed helical filament on oriC DNA; dsDNA binds to the exterior of the filament while single-stranded (ss)DNA is stabiized in the filament's interior. The ATP-DnaA-oriC complex binds and stabilizes one strand of the AT-rich DNA unwinding element (DUE), permitting loading of DNA polymerase. After initiation quickly degrades to an ADP-DnaA complex that is not apt for DNA replication. Binds acidic phospholipids. This chain is Chromosomal replication initiator protein DnaA, found in Buchnera aphidicola subsp. Cinara cedri (strain Cc).